Reading from the N-terminus, the 128-residue chain is Sm-like protein LSM1A (128 aa).

In terms of domain architecture, Sm spans 10–85 (FFSTSLAAYL…VVLIGELDVE (76 aa)).

This sequence belongs to the snRNP Sm proteins family. In terms of assembly, component of the heptameric LSM1-LSM7 complex that forms a seven-membered ring structure with a donut shape. The LSM subunits are arranged in the order LSM1, LSM2, LSM3, LSM6, LSM5, LSM7 and LSM4. LSM1A subunit interacts only with its two neighboring subunits, LSM2 and LSM4. In terms of tissue distribution, expressed in roots, leaves, stems, flowers and siliques.

It is found in the cytoplasm. The protein localises to the P-body. Its function is as follows. Component of the cytoplasmic LSM1-LSM7 complex which is involved in mRNA degradation by promoting decapping and leading to accurate 5'-3' mRNA decay. LSM1A and LSM1B are essential for the formation of the cytoplasmic LSM1-LSM7 complex which regulates developmental gene expression by the decapping of specific development-related transcripts. Required for P-body formation during heat stress. The protein is Sm-like protein LSM1A of Arabidopsis thaliana (Mouse-ear cress).